Here is a 380-residue protein sequence, read N- to C-terminus: Tubulin alpha chain (380 aa).

Positions 46, 115, 119, 120, 154, 181, and 202 each coordinate GTP. A Mg(2+)-binding site is contributed by Glu-46. Glu-228 is an active-site residue.

The protein belongs to the tubulin family. In terms of assembly, dimer of alpha and beta chains. A typical microtubule is a hollow water-filled tube with an outer diameter of 25 nm and an inner diameter of 15 nM. Alpha-beta heterodimers associate head-to-tail to form protofilaments running lengthwise along the microtubule wall with the beta-tubulin subunit facing the microtubule plus end conferring a structural polarity. Microtubules usually have 13 protofilaments but different protofilament numbers can be found in some organisms and specialized cells. The cofactor is Mg(2+).

The protein resides in the cytoplasm. It localises to the cytoskeleton. It catalyses the reaction GTP + H2O = GDP + phosphate + H(+). Its function is as follows. Tubulin is the major constituent of microtubules, a cylinder consisting of laterally associated linear protofilaments composed of alpha- and beta-tubulin heterodimers. Microtubules grow by the addition of GTP-tubulin dimers to the microtubule end, where a stabilizing cap forms. Below the cap, tubulin dimers are in GDP-bound state, owing to GTPase activity of alpha-tubulin. This chain is Tubulin alpha chain (TUB1), found in Encephalitozoon hellem (Microsporidian parasite).